A 395-amino-acid chain; its full sequence is Ketoisovalerate oxidoreductase subunit VorA (395 aa).

Heterotetramer of one alpha, one beta, one delta and one gamma chain.

The enzyme catalyses 3-methyl-2-oxobutanoate + 2 oxidized [2Fe-2S]-[ferredoxin] + CoA = 2-methylpropanoyl-CoA + 2 reduced [2Fe-2S]-[ferredoxin] + CO2 + H(+). The polypeptide is Ketoisovalerate oxidoreductase subunit VorA (vorA) (Pyrococcus abyssi (strain GE5 / Orsay)).